A 427-amino-acid polypeptide reads, in one-letter code: UDP-N-acetylglucosamine 1-carboxyvinyltransferase 2 (427 aa).

19-20 (KN) is a binding site for phosphoenolpyruvate. Arg91 serves as a coordination point for UDP-N-acetyl-alpha-D-glucosamine. The active-site Proton donor is Cys115. Cys115 bears the 2-(S-cysteinyl)pyruvic acid O-phosphothioketal mark. UDP-N-acetyl-alpha-D-glucosamine is bound by residues Asp307 and Val329.

It belongs to the EPSP synthase family. MurA subfamily.

It is found in the cytoplasm. The enzyme catalyses phosphoenolpyruvate + UDP-N-acetyl-alpha-D-glucosamine = UDP-N-acetyl-3-O-(1-carboxyvinyl)-alpha-D-glucosamine + phosphate. Its pathway is cell wall biogenesis; peptidoglycan biosynthesis. Its function is as follows. Cell wall formation. Adds enolpyruvyl to UDP-N-acetylglucosamine. The polypeptide is UDP-N-acetylglucosamine 1-carboxyvinyltransferase 2 (Prochlorococcus marinus (strain SARG / CCMP1375 / SS120)).